A 138-amino-acid polypeptide reads, in one-letter code: Cytosolic calcium-binding protein 2 (138 aa).

The span at 31 to 41 (TEVTQQPEESV) shows a compositional bias: low complexity. Positions 31–122 (TEVTQQPEES…KKTEVVEEKQ (92 aa)) are disordered. 6 repeat units span residues 62–68 (VEEAEKK), 71–75 (ETEKK), 92–98 (VEEEEKK), 109–114 (VEEEKK), 118–122 (VEEKQ), and 131–135 (VAVEK). The tract at residues 62-135 (VEEAEKKDEE…AAAEEVAVEK (74 aa)) is 6 X 5 AA approximate repeats of V-E-E-K-K. The span at 64-85 (EAEKKDEETEKKTEEKDEKTEV) shows a compositional bias: basic and acidic residues. The span at 110-122 (EEEKKTEVVEEKQ) shows a compositional bias: basic and acidic residues.

In terms of tissue distribution, predominantly expressed in roots (e.g. in endodermis in the stele) and stems, to a lower extent in shoots, flowers and siliques, and, at low levels, in leaves.

It is found in the cytoplasm. It localises to the cytosol. In terms of biological role, binds calcium Ca(2+) and may act as a signal mediator to buffer Ca(2+). The chain is Cytosolic calcium-binding protein 2 from Arabidopsis thaliana (Mouse-ear cress).